An 880-amino-acid chain; its full sequence is DNA mismatch repair protein MutS (880 aa).

635 to 642 contributes to the ATP binding site; that stretch reads GPNMGGKS.

This sequence belongs to the DNA mismatch repair MutS family.

In terms of biological role, this protein is involved in the repair of mismatches in DNA. It is possible that it carries out the mismatch recognition step. This protein has a weak ATPase activity. The sequence is that of DNA mismatch repair protein MutS from Nitrosomonas eutropha (strain DSM 101675 / C91 / Nm57).